The sequence spans 543 residues: Myotubularin-related protein 9-like (543 aa).

Residues 124–502 (AWHFHPPECY…QSLRLWQGLF (379 aa)) enclose the Myotubularin phosphatase domain.

The protein belongs to the protein-tyrosine phosphatase family. Non-receptor class myotubularin subfamily.

Functionally, probable pseudophosphatase. The protein is Myotubularin-related protein 9-like of Bos taurus (Bovine).